Reading from the N-terminus, the 347-residue chain is DNA polymerase III subunit delta (347 aa).

This sequence belongs to the DNA polymerase HolA subunit family. Component of the DNA clamp loading complex consisting of tau(3):delta(1):delta'(1). The DNA polymerase III holoenzyme complex contains at least 10 different subunits organized into 3 functionally essential subassemblies: the Pol III core, the beta sliding clamp processivity factor and the clamp-loading complex. The Pol III core (subunits alpha, epsilon and theta) contains the polymerase and the 3'-5' exonuclease proofreading activities. The polymerase is tethered to the template via the dimeric beta sliding clamp processivity factor. The DNA clamp-loading complex assembles the beta sliding clamp onto the primed template and plays a central role in the organization and communication at the replication fork.

It localises to the cytoplasm. The protein localises to the nucleoid. The enzyme catalyses DNA(n) + a 2'-deoxyribonucleoside 5'-triphosphate = DNA(n+1) + diphosphate. Part of the beta sliding clamp loading complex, which hydrolyzes ATP to load the beta clamp onto primed DNA to form the DNA replication pre-initiation complex. DNA polymerase III is a complex, multichain enzyme responsible for most of the replicative synthesis in bacteria. This DNA polymerase also exhibits 3'-5' exonuclease activity. The delta subunit is the wrench that will open the beta subunit dimer. The DNA clamp loading complex (tau(3),delta,delta') is thought to load beta dimers onto DNA by binding ATP which alters the complex's conformation so it can bind beta sliding clamp dimers and open them at one interface. Primed DNA is recognized, ATP is hydrolyzed releasing the clamp loading complex and closing the beta sliding clamp ring around the primed DNA. The chain is DNA polymerase III subunit delta from Bacillus subtilis (strain 168).